The chain runs to 264 residues: ATP synthase subunit a (264 aa).

Helical transmembrane passes span 30–50 (WNID…WLFY), 90–110 (IAPL…MDMI), 111–131 (PVDW…KVVP), 134–154 (DVNI…YYSI), 177–197 (IPVN…SLAL), 208–228 (LIFI…ALGV), and 235–255 (LIFH…LTIV).

This sequence belongs to the ATPase A chain family. F-type ATPases have 2 components, CF(1) - the catalytic core - and CF(0) - the membrane proton channel. CF(1) has five subunits: alpha(3), beta(3), gamma(1), delta(1), epsilon(1). CF(0) has three main subunits: a(1), b(2) and c(9-12). The alpha and beta chains form an alternating ring which encloses part of the gamma chain. CF(1) is attached to CF(0) by a central stalk formed by the gamma and epsilon chains, while a peripheral stalk is formed by the delta and b chains.

The protein resides in the cell inner membrane. Functionally, key component of the proton channel; it plays a direct role in the translocation of protons across the membrane. This chain is ATP synthase subunit a, found in Shewanella frigidimarina (strain NCIMB 400).